A 653-amino-acid polypeptide reads, in one-letter code: Leucine-rich repeat-containing protein 4 (653 aa).

An N-terminal signal peptide occupies residues 1–38 (MKLLWQVTVHHHTWNAILLPFVYLTAQVWILCAAIAAA). An LRRNT domain is found at 39–75 (ASAGPQNCPSVCSCSNQFSKVVCTRRGLSEVPQGIPS). Residues 39–527 (ASAGPQNCPS…SLDEVMKTTK (489 aa)) lie on the Extracellular side of the membrane. Cystine bridges form between C46–C52 and C50–C61. LRR repeat units lie at residues 76 to 97 (NTRY…TFRH), 100 to 121 (HLEV…AFNG), 124 to 145 (SLNT…AFEY), 148 to 169 (KLRE…AFNR), 172 to 194 (SLMR…AFEG), 197 to 218 (NLKY…TPLV), 219 to 240 (GLEE…SFHG), 243 to 264 (SLKK…AFDG), and 267 to 288 (SLVE…LFTP). Residues N277, N322, N363, N388, N410, N434, N440, N447, and N450 are each glycosylated (N-linked (GlcNAc...) asparagine). An LRRCT domain is found at 300-352 (NPWNCDCDILWLAWWLREYIPTNSTCCGRCHAPMHMRGRYLVEVDQASFQCSA). 2 disulfides stabilise this stretch: C304–C329 and C306–C350. The Ig-like domain occupies 353-442 (PFIMDAPRDL…SNASAYLNVS (90 aa)). C374 and C424 are joined by a disulfide. A helical transmembrane segment spans residues 528–548 (IIIGCFVAVTLLAAAMLIVFY). The Cytoplasmic portion of the chain corresponds to 549-653 (KLRKRHQQRS…TKDKVQETQI (105 aa)).

Interacts with DLG4. Interacts (via LRR repeats) with NTNG2. Forms a complex with DLG4 and with NMDA receptors. In terms of processing, N-glycosylated. As to expression, specifically expressed in brain.

Its subcellular location is the membrane. The protein localises to the postsynaptic cell membrane. Its function is as follows. Synaptic adhesion protein. Regulates the formation of exitatory synapses through the recruitment of pre-and-postsynaptic proteins. Organize the lamina/pathway-specific differentiation of dendrites. Plays an important role for auditory synaptic responses. Involved in the suppression of glioma. This chain is Leucine-rich repeat-containing protein 4 (LRRC4), found in Homo sapiens (Human).